Reading from the N-terminus, the 190-residue chain is Threonylcarbamoyl-AMP synthase (190 aa).

One can recognise a YrdC-like domain in the interval 10–190; sequence PQDKESVYRH…DWHSRQVIRA (181 aa).

The protein belongs to the SUA5 family. TsaC subfamily.

The protein localises to the cytoplasm. The enzyme catalyses L-threonine + hydrogencarbonate + ATP = L-threonylcarbamoyladenylate + diphosphate + H2O. In terms of biological role, required for the formation of a threonylcarbamoyl group on adenosine at position 37 (t(6)A37) in tRNAs that read codons beginning with adenine. Catalyzes the conversion of L-threonine, HCO(3)(-)/CO(2) and ATP to give threonylcarbamoyl-AMP (TC-AMP) as the acyladenylate intermediate, with the release of diphosphate. The polypeptide is Threonylcarbamoyl-AMP synthase (Dichelobacter nodosus (strain VCS1703A)).